Reading from the N-terminus, the 388-residue chain is P2X purinoceptor 4 (388 aa).

Over 1 to 33 (MTGCCTVLGAFLFEYDTPRIVLIRSRKVGLMNR) the chain is Cytoplasmic. A helical transmembrane segment spans residues 34 to 54 (TVQLLILAYVIGWVFVWEKGY). Topologically, residues 55 to 338 (QETDSVVSSV…KFDIIPTMIN (284 aa)) are extracellular. Positions 67 and 69 each coordinate ATP. Positions 67 and 69 each coordinate CTP. N-linked (GlcNAc...) asparagine glycans are attached at residues Asn75, Asn110, Asn131, Asn153, and Asn184. Disulfide bonds link Cys116-Cys165, Cys126-Cys149, and Cys132-Cys159. Residues Thr186 and Leu188 each contribute to the ATP site. Thr186 contacts CTP. Residues Asn199 and Asn208 are each glycosylated (N-linked (GlcNAc...) asparagine). 2 cysteine pairs are disulfide-bonded: Cys217-Cys227 and Cys261-Cys270. The ATP site is built by Asn293, Arg295, and Lys313. CTP-binding residues include Asn293, Arg295, and Lys313. The chain crosses the membrane as a helical span at residues 339 to 359 (IGSGLALLGVATVLCDVIVLY). The Cytoplasmic segment spans residues 360-388 (CMKKRYYYREKKYKYVEDYEQGLGNQMEQ).

This sequence belongs to the P2X receptor family. In terms of assembly, functional P2RXs are organized as homomeric and heteromeric trimers. Forms heterotrimer with P2RX1. Interacts with P2RX7 (via C-terminus); this interaction is functional only in the presence of ATP. Forms heterotrimer with P2RX4; functional differences between homomeric P2RX4 and P2RX4/6 heterotrimer are minor. Interacts with AP1M2.

The protein localises to the cell membrane. It is found in the lysosome membrane. It carries out the reaction K(+)(in) = K(+)(out). It catalyses the reaction Na(+)(in) = Na(+)(out). The catalysed reaction is Ca(2+)(in) = Ca(2+)(out). Its activity is regulated as follows. Activated by ATP. pH-dependent and inhibited by acidic pH. Its function is as follows. ATP-gated nonselective transmembrane cation channel permeable to potassium, sodium and calcium. CTP, but not GTP or UTP, functions as a weak affinity agonist for P2RX4. Activated by extracellularly released ATP, it plays multiple role in immunity and central nervous system physiology. Could also function as an ATP-gated cation channel of lysosomal membranes. The polypeptide is P2X purinoceptor 4 (P2RX4) (Bos taurus (Bovine)).